The chain runs to 576 residues: Putative export ATP-binding/permease protein RC1073 (576 aa).

Residues 20 to 303 (LIIVMISLLS…IFELLSEMHL (284 aa)) form the ABC transmembrane type-1 domain. A run of 6 helical transmembrane segments spans residues 21 to 41 (IIVM…GSVF), 57 to 77 (VDNS…ASFF), 135 to 155 (FLSF…LMFF), 158 to 178 (FKLA…LIKF), 242 to 262 (ALFF…VVWI), and 277 to 297 (IISF…IFEL). An ABC transporter domain is found at 336 to 572 (IEFKNVDFTY…SEIYRNICRE (237 aa)). 371–378 (GRSGAGKS) is a binding site for ATP.

It belongs to the ABC transporter superfamily. Homodimer.

It localises to the cell inner membrane. Part of an ABC transporter complex. Transmembrane domains (TMD) form a pore in the inner membrane and the ATP-binding domain (NBD) is responsible for energy generation. The polypeptide is Putative export ATP-binding/permease protein RC1073 (Rickettsia conorii (strain ATCC VR-613 / Malish 7)).